The sequence spans 79 residues: Acyl carrier protein (79 aa).

The 76-residue stretch at 2-77 folds into the Carrier domain; it reads SEIGERVKKI…DATKFLEKNA (76 aa). At Ser-37 the chain carries O-(pantetheine 4'-phosphoryl)serine.

It belongs to the acyl carrier protein (ACP) family. 4'-phosphopantetheine is transferred from CoA to a specific serine of apo-ACP by AcpS. This modification is essential for activity because fatty acids are bound in thioester linkage to the sulfhydryl of the prosthetic group.

The protein localises to the cytoplasm. It participates in lipid metabolism; fatty acid biosynthesis. Carrier of the growing fatty acid chain in fatty acid biosynthesis. The protein is Acyl carrier protein of Nitrobacter winogradskyi (strain ATCC 25391 / DSM 10237 / CIP 104748 / NCIMB 11846 / Nb-255).